A 97-amino-acid polypeptide reads, in one-letter code: Mitochondrial import inner membrane translocase subunit Tim8 A (97 aa).

Residues 43–66 (CWEKCMDKPGPKLDSRAEACFVNC) carry the Twin CX3C motif motif. Cystine bridges form between cysteine 43–cysteine 66 and cysteine 47–cysteine 62. A phosphoserine mark is found at serine 57, serine 87, serine 94, and serine 96.

This sequence belongs to the small Tim family. As to quaternary structure, heterohexamer; composed of 3 copies of TIMM8A and 3 copies of TIMM13, named soluble 70 kDa complex. Associates with the TIM22 complex, whose core is composed of TIMM22.

It localises to the mitochondrion inner membrane. In terms of biological role, mitochondrial intermembrane chaperone that participates in the import and insertion of some multi-pass transmembrane proteins into the mitochondrial inner membrane. Also required for the transfer of beta-barrel precursors from the TOM complex to the sorting and assembly machinery (SAM complex) of the outer membrane. Acts as a chaperone-like protein that protects the hydrophobic precursors from aggregation and guide them through the mitochondrial intermembrane space. The TIMM8-TIMM13 complex mediates the import of proteins such as TIMM23, SLC25A12/ARALAR1 and SLC25A13/ARALAR2, while the predominant TIMM9-TIMM10 70 kDa complex mediates the import of much more proteins. In Rattus norvegicus (Rat), this protein is Mitochondrial import inner membrane translocase subunit Tim8 A (Timm8a).